The chain runs to 288 residues: MVKVGIIGGSGLEDPNILLDPVTVAVDTPYGKPSDDVVEGTINGVECVLLARHGRKHDIMPGNVNFRANLWALYSRGVDVIIASTACGSLQENVEPGHLLFPDSVFDRTTGRQSTFFDGSYDQAPGVCHIQAHPTYNEKLRQVLISTAERCQLVHHRTGFGVCIEGPRFSTKAESMVFKSWGASLVNMTMMPECILAKELGIPYATTALVTDYDCWKEEDHVTASSVMKVFAANVEKAKTLFVEAVGEIGKIDWSAEILKLKTEARESVMISPDVVIPFLTTDNQKKF.

Residues Ser10, 52-53 (RH), and 85-86 (TA) contribute to the phosphate site. Met188 serves as a coordination point for substrate. Thr189 contacts phosphate. 212-214 (DYD) contributes to the substrate binding site.

Belongs to the PNP/MTAP phosphorylase family. MTAP subfamily. In terms of assembly, homotrimer.

The protein resides in the cytoplasm. The protein localises to the nucleus. It catalyses the reaction S-methyl-5'-thioadenosine + phosphate = 5-(methylsulfanyl)-alpha-D-ribose 1-phosphate + adenine. It participates in amino-acid biosynthesis; L-methionine biosynthesis via salvage pathway; S-methyl-5-thio-alpha-D-ribose 1-phosphate from S-methyl-5'-thioadenosine (phosphorylase route): step 1/1. Functionally, catalyzes the reversible phosphorylation of S-methyl-5'-thioadenosine (MTA) to adenine and 5-methylthioribose-1-phosphate. Involved in the breakdown of MTA, a major by-product of polyamine biosynthesis. Responsible for the first step in the methionine salvage pathway after MTA has been generated from S-adenosylmethionine. Has broad substrate specificity with 6-aminopurine nucleosides as preferred substrates. This Caenorhabditis elegans protein is S-methyl-5'-thioadenosine phosphorylase.